We begin with the raw amino-acid sequence, 93 residues long: UPF0473 protein CHY_0543 (93 aa).

It belongs to the UPF0473 family.

This chain is UPF0473 protein CHY_0543, found in Carboxydothermus hydrogenoformans (strain ATCC BAA-161 / DSM 6008 / Z-2901).